A 418-amino-acid chain; its full sequence is Protein-lysine N-trimethyltransferase SMYD5 (418 aa).

The 332-residue stretch at 21-352 (VSVEVRFVSS…PGEEICISYL (332 aa)) folds into the SET domain. The MYND-type zinc-finger motif lies at 98–136 (PELCTVRKDLHQNCPHCQVMYCSAECRLAATEQYHQVLC). Tyrosine 351 is a binding site for S-adenosyl-L-methionine. Residues 385–418 (ADEPNVTSEEEEEEEEEEEGEPEDAELGDEMTDV) form a disordered region.

Belongs to the class V-like SAM-binding methyltransferase superfamily. As to quaternary structure, interacts with the N-CoR complex. Interacts with EHMT2 and CBX5. In terms of processing, ubiquitinated and degradaed by the proteasome in response to mild hypothermia (32 degrees Celsius), relieving repression of the SP1 gene.

Its subcellular location is the cytoplasm. It catalyses the reaction L-lysyl-[protein] + 3 S-adenosyl-L-methionine = N(6),N(6),N(6)-trimethyl-L-lysyl-[protein] + 3 S-adenosyl-L-homocysteine + 3 H(+). The enzyme catalyses L-lysyl(20)-[histone H4] + 3 S-adenosyl-L-methionine = N(6),N(6),N(6)-trimethyl-L-lysyl(20)-[histone H4] + 3 S-adenosyl-L-homocysteine + 3 H(+). It carries out the reaction L-lysyl(36)-[histone H3] + 3 S-adenosyl-L-methionine = N(6),N(6),N(6)-trimethyl-L-lysyl(36)-[histone H3] + 3 S-adenosyl-L-homocysteine + 3 H(+). Protein-lysine N-trimethyltransferase that specifically catalyzes trimethylation of 'Lys-22' of the RPL40/eL40 subunit of the 60S ribosome, thereby promoting translation elongation and protein synthesis. May also act as a histone methyltransferase in the context of histone octamers, but not on nucleosome substrates: trimethylates 'Lys-36' of histone H3 and 'Lys-20' of histone H4 to form H3K36me3 and H4K20me3, respectively. The histone methyltransferase activity, which is independent of its SET domain, is however unsure in vivo. In association with the NCoR corepressor complex, involved in the repression of toll-like receptor 4 (TLR4)-target inflammatory genes in macrophages, possibly by catalyzing the formation of H4K20me3 at the gene promoters. Plays an important role in embryonic stem (ES) cell self-renewal and differentiation. Maintains genome stability of ES cells during differentiation through regulation of heterochromatin formation and repression of endogenous repetitive DNA elements by promoting H4K20me3 marks. Acts as a regulator of the hypothermia response: its degradation in response to mild hypothermia relieves the formation of H3K36me3 at gene promoters, allowing expression of the neuroprotective gene SP1. The protein is Protein-lysine N-trimethyltransferase SMYD5 of Homo sapiens (Human).